The primary structure comprises 122 residues: Large ribosomal subunit protein uL14 (122 aa).

Belongs to the universal ribosomal protein uL14 family. Part of the 50S ribosomal subunit. Forms a cluster with proteins L3 and L19. In the 70S ribosome, L14 and L19 interact and together make contacts with the 16S rRNA in bridges B5 and B8.

Functionally, binds to 23S rRNA. Forms part of two intersubunit bridges in the 70S ribosome. This chain is Large ribosomal subunit protein uL14, found in Shewanella sp. (strain ANA-3).